The chain runs to 302 residues: Lipoyl synthase (302 aa).

[4Fe-4S] cluster-binding residues include C54, C59, C65, C80, C84, C87, and S291. Positions 66-280 constitute a Radical SAM core domain; that stretch reads WSRKTATYML…RIYGKSIGFK (215 aa).

It belongs to the radical SAM superfamily. Lipoyl synthase family. The cofactor is [4Fe-4S] cluster.

It localises to the cytoplasm. It catalyses the reaction [[Fe-S] cluster scaffold protein carrying a second [4Fe-4S](2+) cluster] + N(6)-octanoyl-L-lysyl-[protein] + 2 oxidized [2Fe-2S]-[ferredoxin] + 2 S-adenosyl-L-methionine + 4 H(+) = [[Fe-S] cluster scaffold protein] + N(6)-[(R)-dihydrolipoyl]-L-lysyl-[protein] + 4 Fe(3+) + 2 hydrogen sulfide + 2 5'-deoxyadenosine + 2 L-methionine + 2 reduced [2Fe-2S]-[ferredoxin]. The protein operates within protein modification; protein lipoylation via endogenous pathway; protein N(6)-(lipoyl)lysine from octanoyl-[acyl-carrier-protein]: step 2/2. Catalyzes the radical-mediated insertion of two sulfur atoms into the C-6 and C-8 positions of the octanoyl moiety bound to the lipoyl domains of lipoate-dependent enzymes, thereby converting the octanoylated domains into lipoylated derivatives. The protein is Lipoyl synthase of Leptospira borgpetersenii serovar Hardjo-bovis (strain JB197).